A 237-amino-acid chain; its full sequence is uncharacterized protein (237 aa).

Positions 1–28 (MNRPLLSVAGSLFVAAWALYIFSCFQHG) are cleaved as a signal peptide. A disordered region spans residues 52 to 96 (NARDTAAHPSDTADNTSGSSTTTDPRSHGNAPPAPVGGAAQTHTQ). The segment covering 63-75 (TADNTSGSSTTTD) has biased composition (polar residues).

This is an uncharacterized protein from Treponema pallidum (strain Nichols).